We begin with the raw amino-acid sequence, 832 residues long: Protein P (832 aa).

Residues 1–177 form a terminal protein domain (TP) region; sequence MPLSYQHFRK…FCGSPYSWEQ (177 aa). Positions 178 to 335 are spacer; sequence ELQHGAESFH…YCLSHIVNLL (158 aa). A compositionally biased stretch (polar residues) spans 186-206; it reads FHQQSSGILSRPSVGSSLQSK. 2 disordered regions span residues 186–255 and 280–305; these read FHQQ…GHNA and TSENHSSSGHAVELHNLPPNSARSQS. Residues 210–220 show a composition bias toward low complexity; it reads SRLGLQSQQGH. Positions 336 to 679 are polymerase/reverse transcriptase domain (RT); sequence EDWGPCAEHG…YLNLYPVARQ (344 aa). A Reverse transcriptase domain is found at 346–589; the sequence is EHHIRIPRTP…YSLNFMGYVI (244 aa). Mg(2+) contacts are provided by Asp-418, Asp-540, and Asp-541.

Belongs to the hepadnaviridae P protein family.

The catalysed reaction is DNA(n) + a 2'-deoxyribonucleoside 5'-triphosphate = DNA(n+1) + diphosphate. The enzyme catalyses Endonucleolytic cleavage to 5'-phosphomonoester.. Its activity is regulated as follows. Activated by host HSP70 and HSP40 in vitro to be able to bind the epsilon loop of the pgRNA. Because deletion of the RNase H region renders the protein partly chaperone-independent, the chaperones may be needed indirectly to relieve occlusion of the RNA-binding site by this domain. Inhibited by several reverse-transcriptase inhibitors: Lamivudine, Adefovir and Entecavir. Its function is as follows. Multifunctional enzyme that converts the viral RNA genome into dsDNA in viral cytoplasmic capsids. This enzyme displays a DNA polymerase activity that can copy either DNA or RNA templates, and a ribonuclease H (RNase H) activity that cleaves the RNA strand of RNA-DNA heteroduplexes in a partially processive 3'- to 5'-endonucleasic mode. Neo-synthesized pregenomic RNA (pgRNA) are encapsidated together with the P protein, and reverse-transcribed inside the nucleocapsid. Initiation of reverse-transcription occurs first by binding the epsilon loop on the pgRNA genome, and is initiated by protein priming, thereby the 5'-end of (-)DNA is covalently linked to P protein. Partial (+)DNA is synthesized from the (-)DNA template and generates the relaxed circular DNA (RC-DNA) genome. After budding and infection, the RC-DNA migrates in the nucleus, and is converted into a plasmid-like covalently closed circular DNA (cccDNA). The activity of P protein does not seem to be necessary for cccDNA generation, and is presumably released from (+)DNA by host nuclear DNA repair machinery. The chain is Protein P from Hepatitis B virus genotype D subtype ayw (isolate Australia/AustKW/1991) (HBV-D).